The sequence spans 456 residues: N(6)-adenosine-methyltransferase non-catalytic subunit METTL14 (456 aa).

Basic and acidic residues predominate over residues 39-51 (DEQREIAETRETS). The segment at 39–74 (DEQREIAETRETSRASYDTSATVSKRKMPEEGEADE) is disordered. Residues 52–61 (RASYDTSATV) show a composition bias toward polar residues. 2 interaction with METTL3 regions span residues 135–136 (RD) and 237–238 (SG). Positions 245–254 (RMCLRKWGFR) are positively charged region required for RNA-binding. Interaction with METTL3 stretches follow at residues 255-258 (RSED) and 278-287 (KAIFQRTKEH). The segment at 297-298 (HR) is positively charged region required for RNA-binding. Residues 308-312 (NVDID) are interaction with METTL3. The tract at residues 395–456 (LRPKTPPPKS…GPHRGVFAPR (62 aa)) is disordered. Residues 410-421 (ASRGGGRGGPSA) show a composition bias toward gly residues. Positions 423-441 (RGERGRERNRGSFRGDRGN) are enriched in basic and acidic residues.

This sequence belongs to the MT-A70-like family. Heterodimer; heterodimerizes with mettl3 to form an antiparallel heterodimer that constitutes an active methyltransferase. Component of the WMM complex, a N6-methyltransferase complex composed of a catalytic subcomplex, named MAC, and of an associated subcomplex, named MACOM. The MAC subcomplex is composed of mettl3 and mettl14.

Its subcellular location is the nucleus. The METTL3-METTL14 heterodimer forms a N6-methyltransferase complex that methylates adenosine residues at the N(6) position of some mRNAs and regulates the circadian clock, differentiation of embryonic stem cells and cortical neurogenesis. In the heterodimer formed with mettl3, mettl14 constitutes the RNA-binding scaffold that recognizes the substrate rather than the catalytic core. N6-methyladenosine (m6A), which takes place at the 5'-[AG]GAC-3' consensus sites of some mRNAs, plays a role in mRNA stability and processing. This chain is N(6)-adenosine-methyltransferase non-catalytic subunit METTL14 (mettl14), found in Xenopus tropicalis (Western clawed frog).